A 347-amino-acid polypeptide reads, in one-letter code: NADH-ubiquinone oxidoreductase chain 2 (347 aa).

Helical transmembrane passes span 3 to 23 (PPIL…VMLS), 25 to 45 (HWLL…PILM), 66 to 86 (ASML…QWVI), 93 to 115 (IASI…HFWV), 149 to 169 (INTN…GWGG), 178 to 198 (IMAY…TYNP), 201 to 221 (MILN…LFML), 237 to 257 (FPLI…LPPL), 274 to 294 (NMII…YFYL), and 325 to 345 (LLPP…MLSV).

It belongs to the complex I subunit 2 family. In terms of assembly, core subunit of respiratory chain NADH dehydrogenase (Complex I) which is composed of 45 different subunits. Interacts with TMEM242.

Its subcellular location is the mitochondrion inner membrane. The enzyme catalyses a ubiquinone + NADH + 5 H(+)(in) = a ubiquinol + NAD(+) + 4 H(+)(out). Its function is as follows. Core subunit of the mitochondrial membrane respiratory chain NADH dehydrogenase (Complex I) which catalyzes electron transfer from NADH through the respiratory chain, using ubiquinone as an electron acceptor. Essential for the catalytic activity and assembly of complex I. The sequence is that of NADH-ubiquinone oxidoreductase chain 2 from Canis lupus (Gray wolf).